The primary structure comprises 323 residues: Fructokinase-1 (323 aa).

It belongs to the carbohydrate kinase PfkB family. In terms of tissue distribution, expressed in stems, at higher levels in roots, and hardly detectable in leaves.

The enzyme catalyses D-fructose + ATP = D-fructose 6-phosphate + ADP + H(+). It participates in glycan biosynthesis; starch biosynthesis. Inhibited at high fructose. In terms of biological role, may play an important role in maintaining the flux of carbon towards starch formation in endosperm. May also be involved in a sugar-sensing pathway. The polypeptide is Fructokinase-1 (FRK1) (Zea mays (Maize)).